Here is a 506-residue protein sequence, read N- to C-terminus: Histidine ammonia-lyase (506 aa).

Residues 143-145 (ASG) constitute a cross-link (5-imidazolinone (Ala-Gly)). Position 144 is a 2,3-didehydroalanine (Ser) (serine 144).

Belongs to the PAL/histidase family. Contains an active site 4-methylidene-imidazol-5-one (MIO), which is formed autocatalytically by cyclization and dehydration of residues Ala-Ser-Gly.

It is found in the cytoplasm. It catalyses the reaction L-histidine = trans-urocanate + NH4(+). The protein operates within amino-acid degradation; L-histidine degradation into L-glutamate; N-formimidoyl-L-glutamate from L-histidine: step 1/3. This Salmonella gallinarum (strain 287/91 / NCTC 13346) protein is Histidine ammonia-lyase.